A 2258-amino-acid polypeptide reads, in one-letter code: Genome polyprotein 1 (2258 aa).

One can recognise a Helicase ATP-binding domain in the interval 439 to 597 (SMAQEAKQWS…AVRRYEIKTV (159 aa)). 487 to 494 (RAATVNVT) is a binding site for ATP. Positions 612–778 (DKENSLYVLQ…GVQFYINEHF (167 aa)) constitute a Helicase C-terminal domain. Tyr1141 bears the O-(5'-phospho-RNA)-tyrosine mark. Positions 1257 to 1476 (ATLEGMTMKP…TKPRNMQSAP (220 aa)) constitute a Peptidase C4 domain. Residues His1302, Asp1338, and Cys1405 each act as for nuclear inclusion protein A activity in the active site. Positions 1745–1869 (WTHGSGDGSR…AMSPSFMVKF (125 aa)) constitute a RdRp catalytic domain. 2 disordered regions span residues 2027 to 2047 (NMAAAPPDNRRSRAVVPRGTS) and 2233 to 2258 (TSEQTNMRTTETRRRNDYDGHEALLR). Positions 2242–2258 (TETRRRNDYDGHEALLR) are enriched in basic and acidic residues.

Belongs to the bymoviruses polyprotein 1 family. VPg is uridylylated by the polymerase and is covalently attached to the 5'-end of the genomic RNA. This uridylylated form acts as a nucleotide-peptide primer for the polymerase. Post-translationally, the viral RNA1 of bymoviruses is expressed as a single polyprotein which undergoes post-translational proteolytic processing by the main proteinase NIa-pro resulting in the production of at least eight individual proteins.

It is found in the host cytoplasmic vesicle. It localises to the virion. It catalyses the reaction RNA(n) + a ribonucleoside 5'-triphosphate = RNA(n+1) + diphosphate. The catalysed reaction is Hydrolyzes glutaminyl bonds, and activity is further restricted by preferences for the amino acids in P6 - P1' that vary with the species of potyvirus, e.g. Glu-Xaa-Xaa-Tyr-Xaa-Gln-|-(Ser or Gly) for the enzyme from tobacco etch virus. The natural substrate is the viral polyprotein, but other proteins and oligopeptides containing the appropriate consensus sequence are also cleaved.. In terms of biological role, indispensable for virus replication. Functionally, mediates the cap-independent, EIF4E-dependent translation of viral genomic RNAs. Binds to the cap-binding site of host EIF4E and thus interferes with the host EIF4E-dependent mRNA export and translation. VPg-RNA directly binds EIF4E and is a template for transcription. Also forms trimeric complexes with EIF4E-EIF4G, which are templates for translation. Its function is as follows. Has RNA-binding and proteolytic activities. An RNA-dependent RNA polymerase that plays an essential role in the virus replication. In Barley mild mosaic virus (strain Na1) (BaMMV), this protein is Genome polyprotein 1.